The sequence spans 441 residues: Endothelin receptor type B (441 aa).

The signal sequence occupies residues 1 to 26 (MQPPPSLCGLALLALVLACGMAEVWG). The Extracellular segment spans residues 27–100 (EEREMPSAPA…RPTEIKDTFK (74 aa)). A disordered region spans residues 30 to 90 (EMPSAPATPP…APRRTPPPCQ (61 aa)). The span at 47–65 (LTPSTKTSWPRDSNASLPR) shows a compositional bias: polar residues. Asn-60 is a glycosylation site (N-linked (GlcNAc...) asparagine). The chain crosses the membrane as a helical span at residues 101–125 (YINTVVSCLVFVLGIIGNSTLLRII). The Cytoplasmic segment spans residues 126–136 (YKNKCMRNGPN). The helical transmembrane segment at 137–162 (ILIASLALGDLLHIIIDIPINVYKLL) threads the bilayer. The Extracellular segment spans residues 163-174 (AEDWPFGAEMCK). An intrachain disulfide couples Cys-173 to Cys-254. The helical transmembrane segment at 175 to 196 (LVPFIQKASVGITVLSLCALSI) threads the bilayer. Residues 197–217 (DRYRAVASWSRIKGIGVPKWT) are Cytoplasmic-facing. Residues 218–242 (AVEIVLIWVVSVILAVPEAIGFNLV) form a helical membrane-spanning segment. The Extracellular portion of the chain corresponds to 243 to 270 (TIDYKGSYLRICLLNPTQKTAFMQFYKT). Residues 271-295 (AKDWWLFSFYFCLPLAITAFFYTLM) form a helical membrane-spanning segment. The Cytoplasmic portion of the chain corresponds to 296–323 (TCEMLRKKSGMQIALNDHLKQRREVAKT). Residue Ser-304 is modified to Phosphoserine. The helical transmembrane segment at 324 to 349 (VFCLVLVFGLCWLALHLSRILKLTLY) threads the bilayer. Residues 350 to 361 (DQNDPNRCELLS) lie on the Extracellular side of the membrane. The chain crosses the membrane as a helical span at residues 362-388 (FLLVLDYIGINMASLNSCINPIALYLV). Residues 389-441 (SKRFKNCFKSCLCCWCQSFEEKQSLEEKQSCLKFKANDHGYDNFRSSNKYSSS) lie on the Cytoplasmic side of the membrane. S-palmitoyl cysteine attachment occurs at residues Cys-402 and Cys-404. Ser-418 carries the phosphoserine modification. Position 438 is a phosphotyrosine (Tyr-438). Phosphoserine occurs at positions 439, 440, and 441.

The protein belongs to the G-protein coupled receptor 1 family. Endothelin receptor subfamily. EDNRB sub-subfamily.

It localises to the cell membrane. Its function is as follows. Non-specific receptor for endothelin 1, 2, and 3. Mediates its action by association with G proteins that activate a phosphatidylinositol-calcium second messenger system. The chain is Endothelin receptor type B (EDNRB) from Oryctolagus cuniculus (Rabbit).